The following is a 490-amino-acid chain: Secretory immunoglobulin A-binding protein EsiB (490 aa).

The first 23 residues, 1–23 (MKKSLLAVMLTGLFALVSLPALG), serve as a signal peptide directing secretion. 11 Sel1-like repeats span residues 39 to 74 (AKAQLELGYRYFQGNETTKDLTQAMDWFRRAAEQGY), 77 to 109 (AEYVLGLRYMNGEGVPQDYAQAVIWYKKAALKG), 111 to 145 (PQAQQNLGVMYHEGNGVKVDKAESVKWFRLAAEQG), 153 to 182 (MGDAYFEGDGVTRDYVMAREWYSKAAEQGN), 185 to 218 (SCNQLGYMYSRGLGVERNDAISAQWYRKSATSGD), 222 to 254 (QLHLADMYYFGIGVTQDYTQSRVLFSQSAEQGN), 256 to 290 (IAQFRLGYILEQGLAGAKEPLKALEWYRKSAEQGN), 291 to 327 (SDGQYYLAHLYDKGAEGVAKNREQAISWYTKSAEQGD), 328 to 361 (ATAQANLGAIYFRLGSEEEHKKAVEWFRKAAAKG), 364 to 397 (AAQFNLGNALLQGKGVKKDEQQAAIWMRKAAEQG), and 399 to 430 (SAAQVQLGEIYYYGLGVERDYVQAWAWFDTAS). Residues His122, Glu159, and Asp161 each contribute to the Mg(2+) site.

As to quaternary structure, interacts with human secreted IgA (SIgA) at least via resides 244-260. It depends on Mg(2+) as a cofactor.

It localises to the cell surface. Upon host (human neutrophil) infection interferes with productive FCAR signaling, inhibiting secreted IgA (SIgA) effector functions and probably avoiding neutrophil activation. Inhibits the SIgA-mediated oxidative burst by neutrophils, decreases generation of ROS (reactive oxygen species) by neutrophils and reduces chemotaxis by neutrophils, all of which are SIgA effector functions used to stimulate the immune response. Does not block SIgA-binding to its receptor (FCAR) on neutrophils, but it decreases SIgA-stimulated phosphorylation of cytoplasmic proteins, including phospholipase C-gamma and MAP kinases, all actions that may be advantageous to the pathogen. The polypeptide is Secretory immunoglobulin A-binding protein EsiB (Escherichia coli O6:H1 (strain CFT073 / ATCC 700928 / UPEC)).